The following is a 306-amino-acid chain: Ribosomal protein L11 methyltransferase (306 aa).

The S-adenosyl-L-methionine site is built by threonine 154, glycine 179, aspartate 201, and asparagine 242.

This sequence belongs to the methyltransferase superfamily. PrmA family.

Its subcellular location is the cytoplasm. It catalyses the reaction L-lysyl-[protein] + 3 S-adenosyl-L-methionine = N(6),N(6),N(6)-trimethyl-L-lysyl-[protein] + 3 S-adenosyl-L-homocysteine + 3 H(+). Functionally, methylates ribosomal protein L11. This chain is Ribosomal protein L11 methyltransferase, found in Xanthomonas euvesicatoria pv. vesicatoria (strain 85-10) (Xanthomonas campestris pv. vesicatoria).